The chain runs to 754 residues: 5-methyltetrahydropteroyltriglutamate--homocysteine methyltransferase (754 aa).

5-methyltetrahydropteroyltri-L-glutamate-binding positions include 17–20 (RELK) and lysine 117. L-homocysteine is bound by residues 431-433 (IGS) and glutamate 484. Residues 431 to 433 (IGS) and glutamate 484 each bind L-methionine. Residues 515–516 (RC) and tryptophan 561 each bind 5-methyltetrahydropteroyltri-L-glutamate. Aspartate 599 provides a ligand contact to L-homocysteine. Residue aspartate 599 participates in L-methionine binding. Residue glutamate 605 participates in 5-methyltetrahydropteroyltri-L-glutamate binding. 3 residues coordinate Zn(2+): histidine 641, cysteine 643, and glutamate 665. Residue histidine 694 is the Proton donor of the active site. Cysteine 726 provides a ligand contact to Zn(2+).

This sequence belongs to the vitamin-B12 independent methionine synthase family. Requires Zn(2+) as cofactor.

It catalyses the reaction 5-methyltetrahydropteroyltri-L-glutamate + L-homocysteine = tetrahydropteroyltri-L-glutamate + L-methionine. It participates in amino-acid biosynthesis; L-methionine biosynthesis via de novo pathway; L-methionine from L-homocysteine (MetE route): step 1/1. Its function is as follows. Catalyzes the transfer of a methyl group from 5-methyltetrahydrofolate to homocysteine resulting in methionine formation. The chain is 5-methyltetrahydropteroyltriglutamate--homocysteine methyltransferase from Salmonella newport (strain SL254).